The sequence spans 579 residues: Nuclear receptor coactivator 5 (579 aa).

M1 carries the N-acetylmethionine modification. The interval 1-77 is disordered; sequence MNTAPSRPSP…DIRDHRDSRS (77 aa). The transcription repression stretch occupies residues 1 to 158; that stretch reads MNTAPSRPSP…RDSFDGRGPP (158 aa). Residue T3 is modified to Phosphothreonine. Residues S9, S21, S29, S34, S96, S116, S126, S143, and S151 each carry the phosphoserine modification. The segment covering 11–77 has biased composition (basic and acidic residues); it reads TRRDPYSFGD…DIRDHRDSRS (67 aa). Residues 148 to 172 form a disordered region; the sequence is YRDSFDGRGPPGPESQSRAKERLKR. T274 is modified (phosphothreonine). The LXXLL motif signature appears at 345–349; it reads LINLL. S378 and S381 each carry phosphoserine. 2 disordered regions span residues 378–428 and 446–529; these read SADS…PTSQ and ANSS…RPVS. Low complexity-rich tracts occupy residues 395–420 and 446–460; these read SGSS…ATPT and ANSS…TGSS. The segment at 458–579 is transcription activation; that stretch reads GSSQNQNFST…APMGSYQRHY (122 aa). The segment covering 461-485 has biased composition (polar residues); the sequence is QNQNFSTAANSQPQQRPQASGNQPP.

Binds HTATIP2/TIP30. Interacts with YLPM1. Forms a complex with ILF2, ILF3, YLPM1, KHDRBS1, RBMX and PPP1CA.

The protein localises to the nucleus. In terms of biological role, nuclear receptor coregulator that can have both coactivator and corepressor functions. Interacts with nuclear receptors for steroids (ESR1 and ESR2) independently of the steroid binding domain (AF-2) of the ESR receptors, and with the orphan nuclear receptor NR1D2. Involved in the coactivation of nuclear steroid receptors (ER) as well as the corepression of MYC in response to 17-beta-estradiol (E2). The polypeptide is Nuclear receptor coactivator 5 (Ncoa5) (Mus musculus (Mouse)).